The sequence spans 149 residues: Large ribosomal subunit protein bL9 (149 aa).

This sequence belongs to the bacterial ribosomal protein bL9 family.

In terms of biological role, binds to the 23S rRNA. This Enterobacter sp. (strain 638) protein is Large ribosomal subunit protein bL9.